The sequence spans 281 residues: 3-methyl-2-oxobutanoate hydroxymethyltransferase (281 aa).

Residues D44 and D83 each coordinate Mg(2+). 3-methyl-2-oxobutanoate is bound by residues 44–45 (DS), D83, and K112. E114 provides a ligand contact to Mg(2+). The active-site Proton acceptor is E180. A disordered region spans residues 251–281 (RNGTFPGPEHSSRMDPAELAAALGSQDQATE).

This sequence belongs to the PanB family. As to quaternary structure, homodecamer; pentamer of dimers. It depends on Mg(2+) as a cofactor.

Its subcellular location is the cytoplasm. The enzyme catalyses 3-methyl-2-oxobutanoate + (6R)-5,10-methylene-5,6,7,8-tetrahydrofolate + H2O = 2-dehydropantoate + (6S)-5,6,7,8-tetrahydrofolate. Its pathway is cofactor biosynthesis; (R)-pantothenate biosynthesis; (R)-pantoate from 3-methyl-2-oxobutanoate: step 1/2. Catalyzes the reversible reaction in which hydroxymethyl group from 5,10-methylenetetrahydrofolate is transferred onto alpha-ketoisovalerate to form ketopantoate. In Chloroflexus aurantiacus (strain ATCC 29364 / DSM 637 / Y-400-fl), this protein is 3-methyl-2-oxobutanoate hydroxymethyltransferase.